Reading from the N-terminus, the 580-residue chain is Probable RNA-binding protein CG14230 (580 aa).

Residues 4 to 81 form the RRM domain; it reads TRFFLADLPT…EKLRVSLAKE (78 aa). Basic and acidic residues predominate over residues 89–100; it reads REREENQRREQG. Disordered regions lie at residues 89-131 and 173-211; these read RERE…EDEE and QHRK…KSAI. Residues 110–120 are compositionally biased toward polar residues; the sequence is PSSQLLVQSGQ. Ser-231 carries the post-translational modification Phosphoserine. Acidic residues-rich tracts occupy residues 254 to 263 and 298 to 313; these read ENDDDEEEEQ and NEEE…EPEE. Disordered regions lie at residues 254–316, 333–395, and 463–520; these read ENDD…ESER, SAND…SAVS, and PFSY…IPRN. 2 stretches are compositionally biased toward basic and acidic residues: residues 348–358 and 365–377; these read LRFDPAKEGHQ and QPKE…EETS. The span at 386 to 395 shows a compositional bias: polar residues; it reads AGNSQASAVS. Ser-468 is subject to Phosphoserine. The residue at position 475 (Thr-475) is a Phosphothreonine.

The chain is Probable RNA-binding protein CG14230 from Drosophila melanogaster (Fruit fly).